A 312-amino-acid chain; its full sequence is MATPTRALSQKEQDIQMMLAAEVHLGTKNCNFQMERYVFKRRNDGIYIINLGKTWEKLQLAARVIVAIENPKDIIVQSARPYGQRAVLKFAQYTGAHAIAGRHTPGTFTNQLQTSFSEPRLLILTDPRTDHQPIKEAALGNIPTIAFCDTDSPMRYVDIGIPANNKGKHSIGCLFWLLARMVLQMRRTIAPGHKWDVMVDLFFYREPEEPKEQEGDEVVAAPDYGITDYQATALGGLGGGDWGAPITDAPQWGADVPAVAPIPAVPGSNWGDAAPMPSAVPIATDGWDAAAAPPVAVPPPVVEGVPPPAGWE.

It belongs to the universal ribosomal protein uS2 family. In terms of assembly, component of the small ribosomal subunit. Mature ribosomes consist of a small (40S) and a large (60S) subunit. The 40S subunit contains about 33 different proteins and 1 molecule of RNA (18S). The 60S subunit contains about 49 different proteins and 3 molecules of RNA (25S, 5.8S and 5S). Interacts with ribosomal protein S21.

It localises to the cytoplasm. Functionally, required for the assembly and/or stability of the 40S ribosomal subunit. Required for the processing of the 20S rRNA-precursor to mature 18S rRNA in a late step of the maturation of 40S ribosomal subunits. This chain is Small ribosomal subunit protein uS2, found in Vitis vinifera (Grape).